The following is a 199-amino-acid chain: MIGWLHGQIIDKHQPGKLVLDVNGVGYDVETSLNTFFQIENGNQPVGLHIHTIVREDALLLYGFLDKEERSLFRSLIKVNGVGPKLAMTVLSSISPKEFIQCIHQENAALLTKLPGIGKKTAERLVVEMRDSIKQFDGSVSDTFQKQAGSTHSQQEAISALEALGYKPQEAWKVMNKIDNGNKSCEQLIREALQILSSR.

A domain I region spans residues 1–65; sequence MIGWLHGQII…EDALLLYGFL (65 aa). A domain II region spans residues 66–144; the sequence is DKEERSLFRS…QFDGSVSDTF (79 aa). The segment at 144–148 is flexible linker; sequence FQKQA. The interval 149-199 is domain III; that stretch reads GSTHSQQEAISALEALGYKPQEAWKVMNKIDNGNKSCEQLIREALQILSSR.

The protein belongs to the RuvA family. Homotetramer. Forms an RuvA(8)-RuvB(12)-Holliday junction (HJ) complex. HJ DNA is sandwiched between 2 RuvA tetramers; dsDNA enters through RuvA and exits via RuvB. An RuvB hexamer assembles on each DNA strand where it exits the tetramer. Each RuvB hexamer is contacted by two RuvA subunits (via domain III) on 2 adjacent RuvB subunits; this complex drives branch migration. In the full resolvosome a probable DNA-RuvA(4)-RuvB(12)-RuvC(2) complex forms which resolves the HJ.

The protein resides in the cytoplasm. The RuvA-RuvB-RuvC complex processes Holliday junction (HJ) DNA during genetic recombination and DNA repair, while the RuvA-RuvB complex plays an important role in the rescue of blocked DNA replication forks via replication fork reversal (RFR). RuvA specifically binds to HJ cruciform DNA, conferring on it an open structure. The RuvB hexamer acts as an ATP-dependent pump, pulling dsDNA into and through the RuvAB complex. HJ branch migration allows RuvC to scan DNA until it finds its consensus sequence, where it cleaves and resolves the cruciform DNA. This chain is Holliday junction branch migration complex subunit RuvA, found in Legionella pneumophila subsp. pneumophila (strain Philadelphia 1 / ATCC 33152 / DSM 7513).